The chain runs to 466 residues: 5-hydroxytryptamine receptor (466 aa).

The tract at residues 1 to 21 (MNASRLPGFNDTSQDQPYPTS) is disordered. Topologically, residues 1-66 (MNASRLPGFN…TSFVLMAVTS (66 aa)) are extracellular. Residues N2, N10, N29, N41, N45, and N50 are each glycosylated (N-linked (GlcNAc...) asparagine). The segment covering 10 to 21 (NDTSQDQPYPTS) has biased composition (polar residues). The chain crosses the membrane as a helical span at residues 67–89 (VVLALIILATIVGNVFVIAAIII). Residues 90-99 (ERNLQNVANY) lie on the Cytoplasmic side of the membrane. The chain crosses the membrane as a helical span at residues 100–121 (LVASLAVADLMVACLVMPLGAV). The Extracellular segment spans residues 122–136 (YEVSQGWILGPELCD). C135 and C215 are oxidised to a cystine. A helical transmembrane segment spans residues 137 to 158 (MWTSSDVLCSSASILHLVAIAT). Residues 159–177 (DRYWAVTDVDYIHIRNEKR) lie on the Cytoplasmic side of the membrane. A helical transmembrane segment spans residues 178-200 (IFTMIVLVWGAALVVSLAPQLGW). Residues 201–228 (KDPDYLARITQQQKCLVSQDLAYQIFAT) are Extracellular-facing. A helical membrane pass occupies residues 229–250 (MSTFYVPLAVILILYWKIFQTA). Over 251 to 386 (RRRIRRRRDP…AKRERKAAKT (136 aa)) the chain is Cytoplasmic. Disordered stretches follow at residues 255-282 (RRRR…QSAR) and 339-360 (VPPS…KPER). The span at 339–353 (VPPSVSPEKSSSTVT) shows a compositional bias: low complexity. Residues 387–410 (LAIITGAFVFCWLPFFIMALVMPI) form a helical membrane-spanning segment. Residues 411–419 (CQTCVISDY) lie on the Extracellular side of the membrane. A helical transmembrane segment spans residues 420-442 (LASFFLWLGYFNSTLNPVIYTIF). Residues 443–466 (SPDFRQAFARILFGTHRRRRYKKF) are Cytoplasmic-facing.

This sequence belongs to the G-protein coupled receptor 1 family.

Its subcellular location is the cell membrane. Functionally, this is a receptor for 5-hydroxytryptamine (serotonin), a biogenic hormone that function as a neurotransmitter, a hormone, and a mitogen. In Heliothis virescens (Tobacco budworm moth), this protein is 5-hydroxytryptamine receptor.